A 647-amino-acid chain; its full sequence is uncharacterized protein (647 aa).

Transmembrane regions (helical) follow at residues 14 to 38 (LFPI…LAVW), 61 to 78 (VVAL…TTLF), 90 to 110 (LWLT…PAFI), 140 to 158 (LSAV…VIYW), and 178 to 195 (VIAL…RSSF).

It is found in the cell membrane. This is an uncharacterized protein from Haemophilus influenzae (strain ATCC 51907 / DSM 11121 / KW20 / Rd).